The chain runs to 291 residues: 4-diphosphocytidyl-2-C-methyl-D-erythritol kinase (291 aa).

Lysine 11 is an active-site residue. An ATP-binding site is contributed by 95–105; it reads PVAAGMAGGSS. Residue aspartate 137 is part of the active site.

It belongs to the GHMP kinase family. IspE subfamily.

The catalysed reaction is 4-CDP-2-C-methyl-D-erythritol + ATP = 4-CDP-2-C-methyl-D-erythritol 2-phosphate + ADP + H(+). It participates in isoprenoid biosynthesis; isopentenyl diphosphate biosynthesis via DXP pathway; isopentenyl diphosphate from 1-deoxy-D-xylulose 5-phosphate: step 3/6. Catalyzes the phosphorylation of the position 2 hydroxy group of 4-diphosphocytidyl-2C-methyl-D-erythritol. The polypeptide is 4-diphosphocytidyl-2-C-methyl-D-erythritol kinase (Lachnoclostridium phytofermentans (strain ATCC 700394 / DSM 18823 / ISDg) (Clostridium phytofermentans)).